Reading from the N-terminus, the 212-residue chain is Phosphoenolpyruvate guanylyltransferase (212 aa).

Residues Thr139, Gly155, and Ser158 each coordinate phosphoenolpyruvate.

It belongs to the CofC family.

The enzyme catalyses phosphoenolpyruvate + GTP + H(+) = enolpyruvoyl-2-diphospho-5'-guanosine + diphosphate. Its pathway is cofactor biosynthesis; coenzyme F420 biosynthesis. In terms of biological role, guanylyltransferase that catalyzes the activation of phosphoenolpyruvate (PEP) as enolpyruvoyl-2-diphospho-5'-guanosine, via the condensation of PEP with GTP. It is involved in the biosynthesis of coenzyme F420, a hydride carrier cofactor. The protein is Phosphoenolpyruvate guanylyltransferase of Streptomyces coelicolor (strain ATCC BAA-471 / A3(2) / M145).